The primary structure comprises 214 residues: Holliday junction branch migration complex subunit RuvA (214 aa).

The tract at residues 1–67 is domain I; it reads MVGWLKGLIV…ADNWQFFGFK (67 aa). The segment at 68-146 is domain II; sequence STQERDIFRE…AFAGMDPAPS (79 aa). The interval 147–154 is flexible linker; it reads LAEGVSSE. The domain III stretch occupies residues 155–214; the sequence is QMPESGADVEATLSMLGYDDLEVRRAIRAIAEGSDGPPPPGDDQDAWLRGCLQWLSRDSA.

Belongs to the RuvA family. As to quaternary structure, homotetramer. Forms an RuvA(8)-RuvB(12)-Holliday junction (HJ) complex. HJ DNA is sandwiched between 2 RuvA tetramers; dsDNA enters through RuvA and exits via RuvB. An RuvB hexamer assembles on each DNA strand where it exits the tetramer. Each RuvB hexamer is contacted by two RuvA subunits (via domain III) on 2 adjacent RuvB subunits; this complex drives branch migration. In the full resolvosome a probable DNA-RuvA(4)-RuvB(12)-RuvC(2) complex forms which resolves the HJ.

Its subcellular location is the cytoplasm. In terms of biological role, the RuvA-RuvB-RuvC complex processes Holliday junction (HJ) DNA during genetic recombination and DNA repair, while the RuvA-RuvB complex plays an important role in the rescue of blocked DNA replication forks via replication fork reversal (RFR). RuvA specifically binds to HJ cruciform DNA, conferring on it an open structure. The RuvB hexamer acts as an ATP-dependent pump, pulling dsDNA into and through the RuvAB complex. HJ branch migration allows RuvC to scan DNA until it finds its consensus sequence, where it cleaves and resolves the cruciform DNA. In Synechococcus sp. (strain CC9605), this protein is Holliday junction branch migration complex subunit RuvA.